Consider the following 164-residue polypeptide: 17.8 kDa class II heat shock protein (164 aa).

Residues 48-164 (DARAMAATPA…KPKTIEVKVA (117 aa)) enclose the sHSP domain.

This sequence belongs to the small heat shock protein (HSP20) family.

The protein resides in the cytoplasm. This chain is 17.8 kDa class II heat shock protein, found in Zea mays (Maize).